Consider the following 637-residue polypeptide: MSQQETHGFQTEVKQLLQLMIHSLYSNKEIFLRELVSNAADAADKLRYLALTDDTLYEGNGDLRVRVSANKEKGTVTISDNGIGMTRDSVIEHLGTIAKSGTKEFFSNLSGEASKDSQLIGQFGVGFYSAFIVAKKVTVRTRAAGHAANEGVLWESEGEGSFNVESITKNERGTEIVLHLRDEETEFADDYRLRSIITKYSDHISVPVQMWNEGTPESDGPDGEKVAATEGEWKVMNKATALWTRNKSDITEEEYQEFYKHISHDYSDALKWSHNRVEGKQEYTSLLYIPAKAPWDMWNRDHKHGLKLFVQRVFIMDEAEQFLPTYLRFVRGLIDSNDLPLNVSREILQDNQVTTAMRVGITKRVLGMLEKLAKDEPEQYQSFWAEFGQVLKEGPAEDFANKERIAGLLRFASTHDNSAATTVSLEAYIERMKAGQDKIYYIVADSHEAAANSPHLELLRKKGIEVLLLSERIDEWLVNHLTEFKDKKLHSVTRGDLELGELEDAADKEAHDKVAEESKGLIERVKAALADSVSEVRVTSRLTDTPACVVAGEGEMSTQMIKLMQAAGQPVPESKPTFEINPTHPLVEHLNNETDEQLFADWANLLLQQALLSEKGSLADPSAFIKLTNQMLLASVK.

An a; substrate-binding region spans residues 1 to 345 (MSQQETHGFQ…SNDLPLNVSR (345 aa)). The segment at 346 to 562 (EILQDNQVTT…EGEMSTQMIK (217 aa)) is b. The segment at 563-637 (LMQAAGQPVP…TNQMLLASVK (75 aa)) is c.

The protein belongs to the heat shock protein 90 family. As to quaternary structure, homodimer.

It is found in the cytoplasm. Functionally, molecular chaperone. Has ATPase activity. The polypeptide is Chaperone protein HtpG (Shewanella frigidimarina (strain NCIMB 400)).